Consider the following 256-residue polypeptide: MKFIVIKIGGSTLSDMHPSIINNIKHLRSNNIYPIIVHGGGPFINEALSNQQIEPHFVNGLRVTDKATMTITKHTLIADVNTALVAQFNQHQCSAIGLCGLDAQLFEIKRFDQQYGYVGVPTTLNIDSLSYLCTKFVPIINSIGFNNHDGEFYNINADTLAYFIAASLEAPIYVLSNIAGVLINDVVIPQLPLADINQYIEHGDIYGGMIPKVLDAKNAIENGCPKVIIASGNKPNIIEAIYNNDFVGTTILKSLV.

Substrate contacts are provided by residues 40–41 (GG), arginine 62, and asparagine 154.

This sequence belongs to the acetylglutamate kinase family. ArgB subfamily.

It localises to the cytoplasm. It catalyses the reaction N-acetyl-L-glutamate + ATP = N-acetyl-L-glutamyl 5-phosphate + ADP. It participates in amino-acid biosynthesis; L-arginine biosynthesis; N(2)-acetyl-L-ornithine from L-glutamate: step 2/4. Functionally, catalyzes the ATP-dependent phosphorylation of N-acetyl-L-glutamate. This chain is Acetylglutamate kinase, found in Staphylococcus aureus (strain bovine RF122 / ET3-1).